The primary structure comprises 456 residues: Glutamyl-tRNA reductase (456 aa).

Residues threonine 49–arginine 52, serine 109, glutamate 114–glutamine 116, and glutamine 120 each bind substrate. Cysteine 50 serves as the catalytic Nucleophile. Glycine 189–glycine 194 is an NADP(+) binding site.

The protein belongs to the glutamyl-tRNA reductase family. In terms of assembly, homodimer.

It carries out the reaction (S)-4-amino-5-oxopentanoate + tRNA(Glu) + NADP(+) = L-glutamyl-tRNA(Glu) + NADPH + H(+). It functions in the pathway porphyrin-containing compound metabolism; protoporphyrin-IX biosynthesis; 5-aminolevulinate from L-glutamyl-tRNA(Glu): step 1/2. Catalyzes the NADPH-dependent reduction of glutamyl-tRNA(Glu) to glutamate 1-semialdehyde (GSA). The sequence is that of Glutamyl-tRNA reductase from Mycolicibacterium vanbaalenii (strain DSM 7251 / JCM 13017 / BCRC 16820 / KCTC 9966 / NRRL B-24157 / PYR-1) (Mycobacterium vanbaalenii).